The chain runs to 313 residues: MTQWYPASPALWQGRDDSIEAPDARRLFQTVTRSETFSPENWQQKIALMGFACDEGVKRNAGRPGAAGAPDALRKALANMASHQGHERLVDLGNWVAPTPDLEGAQQALRDAVSRCLRAGMRTLVLGGGHETAFGHGAGVLDVFAQESVGIINLDAHLDLRQTDRATSGTPFRQLAQLCDAQSRAFHYACFGVSRAANTQALWRETQWRNVTVVEDLDCHDALAQMTQFIDKVDKIYLTIDLDVLPVWEMPAVSAPAALGVPLIQVLRLIEPVCRSGKLQAADLVEFNPRFDEDGAAARVAARLGWQIAHWWR.

Positions 130, 155, 157, 159, 241, and 243 each coordinate Mn(2+).

Belongs to the arginase family. Requires Mn(2+) as cofactor.

It carries out the reaction N-formimidoyl-L-glutamate + H2O = formamide + L-glutamate. The protein operates within amino-acid degradation; L-histidine degradation into L-glutamate; L-glutamate from N-formimidoyl-L-glutamate (hydrolase route): step 1/1. Catalyzes the conversion of N-formimidoyl-L-glutamate to L-glutamate and formamide. The protein is Formimidoylglutamase of Salmonella schwarzengrund (strain CVM19633).